We begin with the raw amino-acid sequence, 338 residues long: Acyl-CoA-binding domain-containing protein 1 (338 aa).

The chain crosses the membrane as a helical; Signal-anchor span at residues 11-31; it reads IIFGLIFAYLLAKLISILLAF. 2 N-linked (GlcNAc...) asparagine glycosylation sites follow: Asn35 and Asn41. The interval 69 to 89 is disordered; that stretch reads AEQGSLRGDEDESDDDDWEGV. A compositionally biased stretch (acidic residues) spans 77 to 89; it reads DEDESDDDDWEGV. The ACB domain occupies 94–184; the sequence is LDEAFSAATA…VTQLYPAWVE (91 aa). Residues 126–130, Lys152, and Tyr171 each bind an acyl-CoA; that span reads YGLYK. Residue Asn191 is glycosylated (N-linked (GlcNAc...) asparagine). ANK repeat units lie at residues 217–246, 250–279, 283–312, and 316–338; these read LKID…PVNA, EGRT…DVNA, EGQT…DTTI, and DGNS…KDSN.

Belongs to the ACBP family. In terms of assembly, interacts with RAP2-12. Binds to SMO1-1 and SMO1-2. Glycosylated. In seeds, localized in the outer integument. In terms of tissue distribution, expressed at low levels in roots, stems, leaves, flowers, and siliques, especially within seeds.

The protein localises to the cell membrane. Its subcellular location is the secreted. It is found in the cell wall. It localises to the endoplasmic reticulum membrane. In terms of biological role, binds medium- and long-chain acyl-CoA esters with very high affinity. Can interact in vitro with arachidonyl-CoA, barely with oleoyl-CoA, but not with palmitoyl-CoA. Confers tolerance and binds to lead ions Pb(2+), probably by promoting lead translocation from roots to shoots. May function as an intracellular carrier of acyl-CoA esters. Modulates negatively sterol synthesis during embryogenesis and gametophytes development via interactions with SMO1-1 and SMO1-2; sterols serve as lipid modulators for gene expression of homeodomain-leucine zipper IV transcription factors. The protein is Acyl-CoA-binding domain-containing protein 1 of Arabidopsis thaliana (Mouse-ear cress).